The sequence spans 874 residues: Alanine--tRNA ligase (874 aa).

Zn(2+)-binding residues include His-564, His-568, Cys-665, and His-669.

The protein belongs to the class-II aminoacyl-tRNA synthetase family. Zn(2+) serves as cofactor.

The protein resides in the cytoplasm. The catalysed reaction is tRNA(Ala) + L-alanine + ATP = L-alanyl-tRNA(Ala) + AMP + diphosphate. Catalyzes the attachment of alanine to tRNA(Ala) in a two-step reaction: alanine is first activated by ATP to form Ala-AMP and then transferred to the acceptor end of tRNA(Ala). Also edits incorrectly charged Ser-tRNA(Ala) and Gly-tRNA(Ala) via its editing domain. The protein is Alanine--tRNA ligase of Paraburkholderia xenovorans (strain LB400).